Here is a 196-residue protein sequence, read N- to C-terminus: Large ribosomal subunit protein uL18 (196 aa).

It belongs to the universal ribosomal protein uL18 family. As to quaternary structure, part of the 50S ribosomal subunit. Contacts the 5S and 23S rRNAs.

This is one of the proteins that bind and probably mediate the attachment of the 5S RNA into the large ribosomal subunit, where it forms part of the central protuberance. This is Large ribosomal subunit protein uL18 from Saccharolobus islandicus (strain Y.N.15.51 / Yellowstone #2) (Sulfolobus islandicus).